We begin with the raw amino-acid sequence, 111 residues long: Large ribosomal subunit protein P1 (111 aa).

Residues 84–111 (PAEAAAAEEKKEEEKEESDEDMGFGLFD) form a disordered region.

It belongs to the eukaryotic ribosomal protein P1/P2 family. P1 and P2 exist as dimers at the large ribosomal subunit. Post-translationally, phosphorylated.

Its function is as follows. Plays an important role in the elongation step of protein synthesis. This is Large ribosomal subunit protein P1 from Aspergillus fumigatus (strain ATCC MYA-4609 / CBS 101355 / FGSC A1100 / Af293) (Neosartorya fumigata).